The primary structure comprises 89 residues: Small ribosomal subunit protein uS15 (89 aa).

It belongs to the universal ribosomal protein uS15 family. In terms of assembly, part of the 30S ribosomal subunit. Forms a bridge to the 50S subunit in the 70S ribosome, contacting the 23S rRNA.

Functionally, one of the primary rRNA binding proteins, it binds directly to 16S rRNA where it helps nucleate assembly of the platform of the 30S subunit by binding and bridging several RNA helices of the 16S rRNA. In terms of biological role, forms an intersubunit bridge (bridge B4) with the 23S rRNA of the 50S subunit in the ribosome. This Granulibacter bethesdensis (strain ATCC BAA-1260 / CGDNIH1) protein is Small ribosomal subunit protein uS15.